The sequence spans 402 residues: Probable glutamate 5-kinase (402 aa).

Substrate-binding residues include Ser58, Asp145, and Asn157. Residues 177 to 178 and 218 to 224 contribute to the ATP site; these read TD and TGGMKTK. The PUA domain maps to 295–373; sequence HGSLEIDRGA…KEIASILGYN (79 aa).

Belongs to the glutamate 5-kinase family.

It is found in the cytoplasm. It catalyses the reaction L-glutamate + ATP = L-glutamyl 5-phosphate + ADP. It participates in amino-acid biosynthesis; L-proline biosynthesis; L-glutamate 5-semialdehyde from L-glutamate: step 1/2. In terms of biological role, catalyzes the transfer of a phosphate group to glutamate to form glutamate 5-phosphate which rapidly cyclizes to 5-oxoproline. This is Probable glutamate 5-kinase from Schizosaccharomyces pombe (strain 972 / ATCC 24843) (Fission yeast).